Here is a 477-residue protein sequence, read N- to C-terminus: Aspartyl/glutamyl-tRNA(Asn/Gln) amidotransferase subunit B (477 aa).

It belongs to the GatB/GatE family. GatB subfamily. As to quaternary structure, heterotrimer of A, B and C subunits.

The catalysed reaction is L-glutamyl-tRNA(Gln) + L-glutamine + ATP + H2O = L-glutaminyl-tRNA(Gln) + L-glutamate + ADP + phosphate + H(+). The enzyme catalyses L-aspartyl-tRNA(Asn) + L-glutamine + ATP + H2O = L-asparaginyl-tRNA(Asn) + L-glutamate + ADP + phosphate + 2 H(+). In terms of biological role, allows the formation of correctly charged Asn-tRNA(Asn) or Gln-tRNA(Gln) through the transamidation of misacylated Asp-tRNA(Asn) or Glu-tRNA(Gln) in organisms which lack either or both of asparaginyl-tRNA or glutaminyl-tRNA synthetases. The reaction takes place in the presence of glutamine and ATP through an activated phospho-Asp-tRNA(Asn) or phospho-Glu-tRNA(Gln). The protein is Aspartyl/glutamyl-tRNA(Asn/Gln) amidotransferase subunit B of Lactococcus lactis subsp. cremoris (strain MG1363).